The sequence spans 153 residues: D-aminoacyl-tRNA deacylase (153 aa).

The Gly-cisPro motif, important for rejection of L-amino acids motif lies at 137–138; it reads GP.

This sequence belongs to the DTD family. In terms of assembly, homodimer.

The protein resides in the cytoplasm. The catalysed reaction is glycyl-tRNA(Ala) + H2O = tRNA(Ala) + glycine + H(+). The enzyme catalyses a D-aminoacyl-tRNA + H2O = a tRNA + a D-alpha-amino acid + H(+). An aminoacyl-tRNA editing enzyme that deacylates mischarged D-aminoacyl-tRNAs. Also deacylates mischarged glycyl-tRNA(Ala), protecting cells against glycine mischarging by AlaRS. Acts via tRNA-based rather than protein-based catalysis; rejects L-amino acids rather than detecting D-amino acids in the active site. By recycling D-aminoacyl-tRNA to D-amino acids and free tRNA molecules, this enzyme counteracts the toxicity associated with the formation of D-aminoacyl-tRNA entities in vivo and helps enforce protein L-homochirality. The chain is D-aminoacyl-tRNA deacylase from Myxococcus xanthus (strain DK1622).